The chain runs to 446 residues: Maltoporin (446 aa).

Residues 1 to 25 (MMITLRKLPLAVAVAAGVMSAQAMA) form the signal peptide.

It belongs to the porin LamB (TC 1.B.3) family. As to quaternary structure, homotrimer formed of three 18-stranded antiparallel beta-barrels, containing three independent channels.

The protein resides in the cell outer membrane. The catalysed reaction is beta-maltose(in) = beta-maltose(out). Involved in the transport of maltose and maltodextrins. The sequence is that of Maltoporin from Escherichia coli O8 (strain IAI1).